The sequence spans 185 residues: Peptide methionine sulfoxide reductase MsrA (185 aa).

Cys-12 is a catalytic residue.

Belongs to the MsrA Met sulfoxide reductase family.

The enzyme catalyses L-methionyl-[protein] + [thioredoxin]-disulfide + H2O = L-methionyl-(S)-S-oxide-[protein] + [thioredoxin]-dithiol. It carries out the reaction [thioredoxin]-disulfide + L-methionine + H2O = L-methionine (S)-S-oxide + [thioredoxin]-dithiol. Its function is as follows. Has an important function as a repair enzyme for proteins that have been inactivated by oxidation. Catalyzes the reversible oxidation-reduction of methionine sulfoxide in proteins to methionine. In Granulibacter bethesdensis (strain ATCC BAA-1260 / CGDNIH1), this protein is Peptide methionine sulfoxide reductase MsrA.